The sequence spans 323 residues: tRNA dimethylallyltransferase (323 aa).

ATP is bound at residue 12-19 (GPTAAGKT). Substrate is bound at residue 14–19 (TAAGKT). 2 interaction with substrate tRNA regions span residues 37 to 40 (DSAL) and 161 to 165 (QRLMR).

This sequence belongs to the IPP transferase family. In terms of assembly, monomer. Mg(2+) is required as a cofactor.

The enzyme catalyses adenosine(37) in tRNA + dimethylallyl diphosphate = N(6)-dimethylallyladenosine(37) in tRNA + diphosphate. Its function is as follows. Catalyzes the transfer of a dimethylallyl group onto the adenine at position 37 in tRNAs that read codons beginning with uridine, leading to the formation of N6-(dimethylallyl)adenosine (i(6)A). This chain is tRNA dimethylallyltransferase, found in Pseudomonas paraeruginosa (strain DSM 24068 / PA7) (Pseudomonas aeruginosa (strain PA7)).